Consider the following 219-residue polypeptide: Response regulator ArlR (219 aa).

Residues 3-116 (NILIVEDEQN…ELLARIRAVL (114 aa)) form the Response regulatory domain. A 4-aspartylphosphate modification is found at D52. Residues 122 to 219 (KDVLDINGII…TVRGVGYVIR (98 aa)) constitute a DNA-binding region (ompR/PhoB-type).

In terms of processing, phosphorylated by ArlS.

The protein localises to the cytoplasm. Its function is as follows. Member of the two-component regulatory system ArlS/ArlR. This chain is Response regulator ArlR (arlR), found in Staphylococcus epidermidis (strain ATCC 12228 / FDA PCI 1200).